The sequence spans 315 residues: Voltage-dependent calcium channel gamma-3 subunit (315 aa).

A run of 4 helical transmembrane segments spans residues 8 to 28 (VQMLITTVGAFAAFSLMTIAV), 104 to 124 (SSVFPILSVTLLFFGGLCVAA), 135 to 155 (ILSAGIFFVSAGLSNIIGIIV), and 181 to 201 (FGAFSFIIAEIVGVVAVHIYI). A disordered region spans residues 232–252 (RRRSSSRSTEPRSRDLSPISK). The residue at position 248 (S248) is a Phosphoserine.

It belongs to the PMP-22/EMP/MP20 family. CACNG subfamily. As to quaternary structure, the L-type calcium channel is composed of five subunits: alpha-1, alpha-2/delta, beta and gamma. Acts as an auxiliary subunit for AMPA-selective glutamate receptors (AMPARs). Found in a complex with GRIA1, GRIA2, GRIA3, GRIA4, CNIH2, CNIH3, CACNG2, CACNG4, CACNG5, CACNG7 and CACNG8. Interacts with AP4M1 and GRIA1; associates GRIA1 with the adaptor protein complex 4 (AP-4) to target GRIA1 to the somatodendritic compartment of neurons.

Its subcellular location is the membrane. Functionally, regulates the trafficking and gating properties of AMPA-selective glutamate receptors (AMPARs). Promotes their targeting to the cell membrane and synapses and modulates their gating properties by slowing their rates of activation, deactivation and desensitization. Does not show subunit-specific AMPA receptor regulation and regulates all AMPAR subunits. Thought to stabilize the calcium channel in an inactivated (closed) state. The protein is Voltage-dependent calcium channel gamma-3 subunit (CACNG3) of Bos taurus (Bovine).